The following is a 329-amino-acid chain: DNA-directed RNA polymerase subunit alpha (329 aa).

The tract at residues Met1–Arg235 is alpha N-terminal domain (alpha-NTD). The tract at residues Phe249 to Asp329 is alpha C-terminal domain (alpha-CTD).

It belongs to the RNA polymerase alpha chain family. In terms of assembly, homodimer. The RNAP catalytic core consists of 2 alpha, 1 beta, 1 beta' and 1 omega subunit. When a sigma factor is associated with the core the holoenzyme is formed, which can initiate transcription.

The catalysed reaction is RNA(n) + a ribonucleoside 5'-triphosphate = RNA(n+1) + diphosphate. Functionally, DNA-dependent RNA polymerase catalyzes the transcription of DNA into RNA using the four ribonucleoside triphosphates as substrates. The polypeptide is DNA-directed RNA polymerase subunit alpha (Photobacterium profundum (strain SS9)).